The following is a 616-amino-acid chain: Glucoamylase P (616 aa).

The signal sequence occupies residues 1–29 (MRLLPSSCAGALSLLCSLAIAAPTELKAR). Trp149 is a binding site for substrate. An N-linked (GlcNAc...) asparagine glycan is attached at Asn200. Asp205 functions as the Proton acceptor in the catalytic mechanism. The active-site Proton donor is the Glu208. N-linked (GlcNAc...) asparagine glycosylation occurs at Asn427. Positions 501–608 (VTSSCQVSIT…AVTTDDAWMG (108 aa)) constitute a CBM20 domain.

The protein belongs to the glycosyl hydrolase 15 family.

The protein resides in the secreted. The catalysed reaction is Hydrolysis of terminal (1-&gt;4)-linked alpha-D-glucose residues successively from non-reducing ends of the chains with release of beta-D-glucose.. This Amorphotheca resinae (Creosote fungus) protein is Glucoamylase P (GAMP).